A 457-amino-acid polypeptide reads, in one-letter code: Bifunctional protein GlmU (457 aa).

A pyrophosphorylase region spans residues 1 to 230; that stretch reads MPLSLPLHIV…PREVEGVNDL (230 aa). UDP-N-acetyl-alpha-D-glucosamine-binding positions include 12 to 15, lysine 26, glutamine 78, 83 to 84, 105 to 107, glycine 140, glutamate 155, asparagine 170, and asparagine 228; these read LAAG, GT, and YGD. Aspartate 107 is a binding site for Mg(2+). Asparagine 228 contacts Mg(2+). Positions 231-251 are linker; that stretch reads WQLTQLERTWQIRAARALCLQ. The segment at 252–457 is N-acetyltransferase; that stretch reads GARVADPARL…DGWQRPKKKT (206 aa). UDP-N-acetyl-alpha-D-glucosamine contacts are provided by arginine 334 and lysine 352. Residue histidine 364 is the Proton acceptor of the active site. 2 residues coordinate UDP-N-acetyl-alpha-D-glucosamine: tyrosine 367 and asparagine 378. Acetyl-CoA-binding positions include alanine 381, 387–388, serine 406, alanine 424, and arginine 441; that span reads NY.

It in the N-terminal section; belongs to the N-acetylglucosamine-1-phosphate uridyltransferase family. The protein in the C-terminal section; belongs to the transferase hexapeptide repeat family. In terms of assembly, homotrimer. Mg(2+) serves as cofactor.

It localises to the cytoplasm. It carries out the reaction alpha-D-glucosamine 1-phosphate + acetyl-CoA = N-acetyl-alpha-D-glucosamine 1-phosphate + CoA + H(+). It catalyses the reaction N-acetyl-alpha-D-glucosamine 1-phosphate + UTP + H(+) = UDP-N-acetyl-alpha-D-glucosamine + diphosphate. The protein operates within nucleotide-sugar biosynthesis; UDP-N-acetyl-alpha-D-glucosamine biosynthesis; N-acetyl-alpha-D-glucosamine 1-phosphate from alpha-D-glucosamine 6-phosphate (route II): step 2/2. It participates in nucleotide-sugar biosynthesis; UDP-N-acetyl-alpha-D-glucosamine biosynthesis; UDP-N-acetyl-alpha-D-glucosamine from N-acetyl-alpha-D-glucosamine 1-phosphate: step 1/1. It functions in the pathway bacterial outer membrane biogenesis; LPS lipid A biosynthesis. Catalyzes the last two sequential reactions in the de novo biosynthetic pathway for UDP-N-acetylglucosamine (UDP-GlcNAc). The C-terminal domain catalyzes the transfer of acetyl group from acetyl coenzyme A to glucosamine-1-phosphate (GlcN-1-P) to produce N-acetylglucosamine-1-phosphate (GlcNAc-1-P), which is converted into UDP-GlcNAc by the transfer of uridine 5-monophosphate (from uridine 5-triphosphate), a reaction catalyzed by the N-terminal domain. This Xylella fastidiosa (strain M12) protein is Bifunctional protein GlmU.